The sequence spans 393 residues: DNA/RNA-binding protein KIN17 (393 aa).

The C2H2-type zinc-finger motif lies at 28–50; it reads CQMCQKQCRDENGFKCHCMSESH. Positions 51–160 are winged helix-turn-helix (wHTH); sequence QRQLLLASEN…RQLELEKKKK (110 aa). Lys-135 is subject to N6,N6,N6-trimethyllysine; by METTL22; in vitro. Residue Lys-135 is modified to N6-methyllysine. Residues 147 to 180 adopt a coiled-coil conformation; that stretch reads ETIRRQLELEKKKKQDLDDEEKTAKFIEEQVRRG. The segment covering 209-224 has biased composition (low complexity); it reads KGACSSSGATSSKSST. The interval 209–260 is disordered; it reads KGACSSSGATSSKSSTLGPSALKTIGSSASVKRKESSQSSTQSKEKKKKKSA. Residues 250–277 adopt a coiled-coil conformation; the sequence is QSKEKKKKKSALDEIMEIEEEKKRTART. Residues 284–334 are C-terminal subdomain A; the sequence is EIIVKIITKKLGEKYHKKKAIVKEVIDKYTAVVKMIDSGDKLKLDQTHLET. Positions 340-391 are C-terminal subdomain B; sequence GKRILVLNGGYRGNEGTLESINEKTFSATIVIETGPLKGRRVEGIQYEDISK.

This sequence belongs to the KIN17 family. Associated with DNA polymerase alpha, RFC1 and cyclin A, in multiprotein DNA replication complexes. Also associates with replication origins at the G1/S phase boundary and throughout the S phase in vivo. As to quaternary structure, (Microbial infection) Interacts with SV40 large T antigen. As to expression, ubiquitously expressed in all tissues examined, with highest levels in skeletal muscle, heart and testis. Differentially expressed in non-tumorigenic and tumorigenic cell lines. Highly expressed in proliferating epithelial keratinocyte cells in vitro (at protein level).

The protein resides in the nucleus. It localises to the cytoplasm. Involved in DNA replication and the cellular response to DNA damage. May participate in DNA replication factories and create a bridge between DNA replication and repair mediated by high molecular weight complexes. May play a role in illegitimate recombination and regulation of gene expression. May participate in mRNA processing. Binds, in vitro, to double-stranded DNA. Also shown to bind preferentially to curved DNA in vitro and in vivo. Binds via its C-terminal domain to RNA in vitro. This Homo sapiens (Human) protein is DNA/RNA-binding protein KIN17.